We begin with the raw amino-acid sequence, 377 residues long: Guanine nucleotide-binding protein subunit beta-2 (377 aa).

7 WD repeats span residues 63–93 (GHTGKVYSLDWTPEKNRIVSASQDGRLIVWN), 105–135 (LPCAWVMTCAFSPSGQSVACGGLDSVCSIFN), 154–185 (GHKGYVSSCQYVPDEDTHVITSSGDQTCVLWD), 202–233 (GHTADVQSVSISSSNPRLFVSGSCDSTARLWD), 246–276 (GHEGDVNTVKFFPDGNRFGTGSDDGTCRLFD), 293–323 (GDIPHVTSMAFSISGRLLFVGYSNGDCYVWD), and 339–369 (SHEGRISCLGLSADGSALCTGSWDTNLKIWA).

Belongs to the WD repeat G protein beta family. G proteins are composed of 3 units, alpha, beta and gamma.

Guanine nucleotide-binding proteins (G proteins) are involved as a modulator or transducer in various transmembrane signaling systems. The beta and gamma chains are required for the GTPase activity, for replacement of GDP by GTP, and for G protein-effector interaction. This chain is Guanine nucleotide-binding protein subunit beta-2, found in Nicotiana tabacum (Common tobacco).